A 213-amino-acid polypeptide reads, in one-letter code: tRNA (guanine-N(7)-)-methyltransferase (213 aa).

The S-adenosyl-L-methionine site is built by Glu38, Glu63, Asp91, and Asp113. Asp113 is a catalytic residue. Residues Lys117, Asp149, and Thr192–Glu195 contribute to the substrate site.

It belongs to the class I-like SAM-binding methyltransferase superfamily. TrmB family.

It catalyses the reaction guanosine(46) in tRNA + S-adenosyl-L-methionine = N(7)-methylguanosine(46) in tRNA + S-adenosyl-L-homocysteine. It participates in tRNA modification; N(7)-methylguanine-tRNA biosynthesis. In terms of biological role, catalyzes the formation of N(7)-methylguanine at position 46 (m7G46) in tRNA. This is tRNA (guanine-N(7)-)-methyltransferase from Mycoplasmoides gallisepticum (strain R(low / passage 15 / clone 2)) (Mycoplasma gallisepticum).